Consider the following 82-residue polypeptide: U7-hexatoxin-Mg1a (82 aa).

Positions 1–26 are cleaved as a signal peptide; sequence MRTIVFLIVSILLLSSAVLMLAEGNA. The propeptide occupies 27–44; sequence ASHELQEYPIEESLEEQR. 4 disulfides stabilise this stretch: Cys46-Cys62, Cys51-Cys67, Cys61-Cys77, and Cys69-Cys75. Arg80 bears the Arginine amide mark.

It belongs to the rTX family. Expressed by the venom gland.

Its subcellular location is the secreted. Functionally, induces flaccid paralysis when injected into lepidopteran larvae. Intracranial injection into mice causes awkwardness of movement and laboured respiration until death. This is U7-hexatoxin-Mg1a from Macrothele gigas (Japanese funnel web spider).